A 179-amino-acid chain; its full sequence is Chymotrypsin inhibitor ECI (179 aa).

Glutamine 1 carries the post-translational modification Pyrrolidone carboxylic acid. Disulfide bonds link cysteine 40-cysteine 84 and cysteine 134-cysteine 143.

The protein belongs to the protease inhibitor I3 (leguminous Kunitz-type inhibitor) family.

Functionally, inhibition of chymotrypsin. The polypeptide is Chymotrypsin inhibitor ECI (Erythrina variegata (Indian coral tree)).